We begin with the raw amino-acid sequence, 170 residues long: RNA polymerase sigma factor TcsR (170 aa).

A sigma-70 factor domain-4 region spans residues 122–169 (IKDLTQNEKNILRKIYLHGLRESEISRELNISRQAVNKTHLRALEKLK). Positions 143–162 (ESEISRELNISRQAVNKTHL) form a DNA-binding region, H-T-H motif.

It belongs to the sigma-70 factor family.

Its function is as follows. Sigma factors are initiation factors that promote the attachment of RNA polymerase to specific initiation sites and are then released. Transcriptional regulator specifically required to activate expression of the toxin gene locus, composed of tcsL and tcdE/utxA. The chain is RNA polymerase sigma factor TcsR from Paraclostridium sordellii (strain ATCC 9714 / DSM 2141 / JCM 3814 / LMG 15708 / NCIMB 10717 / 211) (Clostridium sordellii).